The primary structure comprises 419 residues: DNA-directed RNA polymerase I subunit RPA49 (419 aa).

Phosphoserine occurs at positions 35 and 163. K373 bears the N6-acetyllysine mark. The segment at 397-419 is disordered; it reads GTLSLPLPPAQTSDRLAKRRKIT.

The protein belongs to the eukaryotic RPA49/POLR1E RNA polymerase subunit family. In terms of assembly, component of the RNA polymerase I (Pol I) complex consisting of 13 subunits: a ten-subunit catalytic core composed of POLR1A/RPA1, POLR1B/RPA2, POLR1C/RPAC1, POLR1D/RPAC2, POLR1H/RPA12, POLR2E/RPABC1, POLR2F/RPABC2, POLR2H/RPABC3, POLR2K/RPABC4 and POLR2L/RPABC5; a mobile stalk subunit POLR1F/RPA43 protruding from the core and additional subunits homologous to general transcription factors POLR1E/RPA49 and POLR1G/RPA34. Forms a heterodimer with POLR1G/RPA34. Interacts with POLR1G. Also binds UBTF/UBF. Interacts with PWP1. Post-translationally, acetylated at Lys-373 by CREBBP/CBP, leading to decreased RNA polymerase I transcription. In normal conditions, deacetylated by SIRT7, promoting the association of RNA polymerase I with the rDNA promoter region and coding region. In response to stress, SIRT7 is released from nucleoli leading to hyperacetylation of POLR1E/PAF53 and decreased association of RNA polymerase I with the rDNA promoter region.

Its subcellular location is the nucleus. The protein resides in the nucleolus. Its function is as follows. Component of RNA polymerase I (Pol I), a DNA-dependent RNA polymerase which synthesizes ribosomal RNA precursors using the four ribonucleoside triphosphates as substrates. Appears to be involved in the formation of the initiation complex at the promoter by mediating the interaction between Pol I and UBTF/UBF. This chain is DNA-directed RNA polymerase I subunit RPA49 (POLR1E), found in Homo sapiens (Human).